The primary structure comprises 336 residues: Mitochondrial amidoxime reducing component 2 (336 aa).

A mitochondrion-targeting transit peptide spans 1 to 35 (MGAAGSSALARLGLPALPGPRWLGVAALGLAAVAL). Glycyl lysine isopeptide (Lys-Gly) (interchain with G-Cter in ubiquitin) cross-links involve residues Lys-138, Lys-144, Lys-173, Lys-187, Lys-287, and Lys-294. One can recognise an MOSC domain in the interval 188–334 (ARASNEIFPS…LKVGDPVYQM (147 aa)).

As to quaternary structure, component of a complex composed of cytochrome b5, NADH-cytochrome b5 reductase (CYB5R3) and MTARC2. Requires Mo-molybdopterin as cofactor. Ubiquitinated by PRKN during mitophagy, leading to its degradation and enhancement of mitophagy. Deubiquitinated by USP30.

The protein resides in the mitochondrion outer membrane. It localises to the peroxisome. The catalysed reaction is N(omega)-hydroxy-L-arginine + 2 Fe(II)-[cytochrome b5] + 2 H(+) = L-arginine + 2 Fe(III)-[cytochrome b5] + H2O. Functionally, catalyzes the reduction of N-oxygenated molecules, acting as a counterpart of cytochrome P450 and flavin-containing monooxygenases in metabolic cycles. As a component of prodrug-converting system, reduces a multitude of N-hydroxylated prodrugs particularly amidoximes, leading to increased drug bioavailability. May be involved in mitochondrial N(omega)-hydroxy-L-arginine (NOHA) reduction, regulating endogenous nitric oxide levels and biosynthesis. Postulated to cleave the N-OH bond of N-hydroxylated substrates in concert with electron transfer from NADH to cytochrome b5 reductase then to cytochrome b5, the ultimate electron donor that primes the active site for substrate reduction. The sequence is that of Mitochondrial amidoxime reducing component 2 (MTARC2) from Bos taurus (Bovine).